We begin with the raw amino-acid sequence, 717 residues long: Cleavage stimulation factor subunit 3 (717 aa).

S2 carries the post-translational modification N-acetylserine. HAT repeat units follow at residues 45-77 (QPIDKARKTYERLVAQFPSSGRFWKLYIEAEIK), 79-110 (KNYDKVEKLFQRCLMKVLHIDLWKCYLSYVRE), 117-152 (SYKEKMAQAYDFALDKIGMEIMSYQIWVDYINFLKG), 163-196 (QRITAVRRVYQRGCVNPMINIEQLWRDYNKYEEG), 221-261 (KEYE…WEKS), 271-303 (LITKRVMFAYEQCLLVLGHHPDIWYEAAQYLEQ), 319-352 (LFSDEAANIYERAISTLLKKNMLLYFAYADYEES), 354-387 (MKYEKVHSIYNRLLAIEDIDPTLVYIQYMKFARR), and 458-494 (NEDNNTRVLFERVLTSGSLPPEKSGEIWARFLAFESN). Positions 684 to 705 (VKRPNEDSDEDEEKGAVVPPVH) are disordered. Residue S691 is modified to Phosphoserine.

As to quaternary structure, homodimer. The CSTF complex is composed of CSTF1 (50 kDa subunit), CSTF2 (64 kDa subunit) and CSTF3 (77 kDa subunit). CSTF3 directly interacts with CSTF1 and CSTF2. Interacts with FIP1L1.

It localises to the nucleus. In terms of biological role, one of the multiple factors required for polyadenylation and 3'-end cleavage of mammalian pre-mRNAs. The polypeptide is Cleavage stimulation factor subunit 3 (CSTF3) (Pongo abelii (Sumatran orangutan)).